A 250-amino-acid chain; its full sequence is UPF0259 membrane protein PC1_1998 (250 aa).

The next 6 helical transmembrane spans lie at 20–40, 90–110, 132–152, 156–176, 192–212, and 222–242; these read FISI…LNHA, FAAL…IQLV, LLFL…LLVI, LLAI…SGIF, ATAP…LVVS, and LGVV…IYLF.

The protein belongs to the UPF0259 family.

Its subcellular location is the cell inner membrane. The protein is UPF0259 membrane protein PC1_1998 of Pectobacterium carotovorum subsp. carotovorum (strain PC1).